The sequence spans 158 residues: Lipoprotein signal peptidase (158 aa).

4 helical membrane passes run 7–27 (LFWI…YWVV), 38–58 (LLTG…FSLL), 68–88 (LSLG…TLNL), and 92–112 (LGYG…FVLG). Active-site residues include Asp116 and Asp132. The helical transmembrane segment at 125–145 (FPVFNVADSFISIGIVFLLIA) threads the bilayer.

Belongs to the peptidase A8 family.

The protein localises to the cell inner membrane. It carries out the reaction Release of signal peptides from bacterial membrane prolipoproteins. Hydrolyzes -Xaa-Yaa-Zaa-|-(S,diacylglyceryl)Cys-, in which Xaa is hydrophobic (preferably Leu), and Yaa (Ala or Ser) and Zaa (Gly or Ala) have small, neutral side chains.. It functions in the pathway protein modification; lipoprotein biosynthesis (signal peptide cleavage). In terms of biological role, this protein specifically catalyzes the removal of signal peptides from prolipoproteins. The protein is Lipoprotein signal peptidase of Nostoc punctiforme (strain ATCC 29133 / PCC 73102).